The primary structure comprises 203 residues: Small ribosomal subunit protein eS1 (203 aa).

It belongs to the eukaryotic ribosomal protein eS1 family.

The chain is Small ribosomal subunit protein eS1 from Methanosarcina acetivorans (strain ATCC 35395 / DSM 2834 / JCM 12185 / C2A).